Consider the following 277-residue polypeptide: Urease accessory protein UreD (277 aa).

The protein belongs to the UreD family. As to quaternary structure, ureD, UreF and UreG form a complex that acts as a GTP-hydrolysis-dependent molecular chaperone, activating the urease apoprotein by helping to assemble the nickel containing metallocenter of UreC. The UreE protein probably delivers the nickel.

The protein resides in the cytoplasm. Its function is as follows. Required for maturation of urease via the functional incorporation of the urease nickel metallocenter. The polypeptide is Urease accessory protein UreD (Pseudomonas putida (strain W619)).